The chain runs to 1122 residues: RecBCD enzyme subunit RecC (1122 aa).

It belongs to the RecC family. In terms of assembly, heterotrimer of RecB, RecC and RecD. All subunits contribute to DNA-binding. Interacts with YgbT (Cas1). (Microbial infection) Lambda virus GamS protein interacts with the enzyme without displacing any of the subunits.

After reacting with DNA bearing a Chi site the holoenzyme is disassembled and loses exonuclease activity, DNA unwinding and Chi-directed DNA cleavage; RecB remains complexed with ssDNA, which may prevent holoenzyme reassembly. High levels of Mg(2+) (13 mM MgCl(2+)) or incubation with DNase allow holoenzyme reassembly, suggesting it is DNA bound to RecB that prevents reassembly. With respect to regulation, (Microbial infection) RecBCD is inhibited by the lambda virus gam protein (both GamL and GamS isoforms); in vitro a short preincubation prior to adding DNA results in maximal inhibition. In terms of biological role, a helicase/nuclease that prepares dsDNA breaks (DSB) for recombinational DNA repair. Binds to DSBs and unwinds DNA via a rapid (&gt;1 kb/second) and highly processive (&gt;30 kb) ATP-dependent bidirectional helicase. Unwinds dsDNA until it encounters a Chi (crossover hotspot instigator, 5'-GCTGGTGG-3') sequence from the 3' direction. Cuts ssDNA a few nucleotides 3' to Chi site, by nicking one strand or switching the strand degraded (depending on the reaction conditions). The properties and activities of the enzyme are changed at Chi. The Chi-altered holoenzyme produces a long 3'-ssDNA overhang which facilitates RecA-binding to the ssDNA for homologous DNA recombination and repair. Holoenzyme degrades any linearized DNA that is unable to undergo homologous recombination. In the holoenzyme this subunit almost certainly recognizes the wild-type Chi sequence, when added to isolated RecB increases its ATP-dependent helicase processivity. The RecBC complex requires the RecD subunit for nuclease activity, but can translocate along ssDNA in both directions. The RecBCD complex does not unwind G-quadruplex DNA. The sequence is that of RecBCD enzyme subunit RecC from Escherichia coli (strain K12).